The primary structure comprises 268 residues: UPF0354 protein OB2234 (268 aa).

It belongs to the UPF0354 family.

The polypeptide is UPF0354 protein OB2234 (Oceanobacillus iheyensis (strain DSM 14371 / CIP 107618 / JCM 11309 / KCTC 3954 / HTE831)).